The sequence spans 63 residues: Cecropin-1/3 (63 aa).

The N-terminal stretch at 1–23 (MNFYKVFIFVALILAISLGQSEA) is a signal peptide. Arginine amide is present on Arg-62.

It belongs to the cecropin family.

The protein localises to the secreted. Its function is as follows. Cecropins have lytic and antibacterial activity against several Gram-positive and Gram-negative bacteria. The protein is Cecropin-1/3 (Cec1) of Drosophila virilis (Fruit fly).